The primary structure comprises 339 residues: D-alanine--D-alanine ligase (339 aa).

In terms of domain architecture, ATP-grasp spans 115-327 (KHIFRSLGID…FNELVKIIIE (213 aa)). 142 to 211 (KIDYPYVLKP…EEYIPGIELH (70 aa)) serves as a coordination point for ATP. Residues Asp279, Glu293, and Asn295 each coordinate Mg(2+).

Belongs to the D-alanine--D-alanine ligase family. The cofactor is Mg(2+). Requires Mn(2+) as cofactor.

Its subcellular location is the cytoplasm. It carries out the reaction 2 D-alanine + ATP = D-alanyl-D-alanine + ADP + phosphate + H(+). The protein operates within cell wall biogenesis; peptidoglycan biosynthesis. Cell wall formation. The protein is D-alanine--D-alanine ligase of Wolbachia sp. subsp. Brugia malayi (strain TRS).